The primary structure comprises 123 residues: Small ribosomal subunit protein uS12 (123 aa).

Positions 1–26 (MPTINQLVRKPRKSRSSLNKAPALQH) are disordered. D90 is modified (3-methylthioaspartic acid).

This sequence belongs to the universal ribosomal protein uS12 family. As to quaternary structure, part of the 30S ribosomal subunit. Contacts proteins S8 and S17. May interact with IF1 in the 30S initiation complex.

With S4 and S5 plays an important role in translational accuracy. Functionally, interacts with and stabilizes bases of the 16S rRNA that are involved in tRNA selection in the A site and with the mRNA backbone. Located at the interface of the 30S and 50S subunits, it traverses the body of the 30S subunit contacting proteins on the other side and probably holding the rRNA structure together. The combined cluster of proteins S8, S12 and S17 appears to hold together the shoulder and platform of the 30S subunit. The protein is Small ribosomal subunit protein uS12 of Ehrlichia chaffeensis (strain ATCC CRL-10679 / Arkansas).